A 215-amino-acid polypeptide reads, in one-letter code: Riboflavin synthase (215 aa).

Lumazine-binding repeat units lie at residues 1–96 (MFTG…FGGH) and 97–193 (FVSG…YRFL). Residues 4–6 (GII), 47–49 (CLT), 61–66 (DVMPET), 100–102 (GHV), Lys135, 144–146 (SLT), and 158–163 (SLIPHT) contribute to the 2,4-dihydroxypteridine site.

In terms of assembly, homotrimer. Can interact with 6,7-dimethyl-8-ribityllumazine synthase, forming a lumazine synthase/riboflavin synthase complex, also designated as 'heavy riboflavin synthase complex', which consists of a trimer of riboflavin synthase enclosed within an icosahedral structure composed of 60 subunits of 6,7-dimethyl-8-ribityllumazine synthase.

The enzyme catalyses 2 6,7-dimethyl-8-(1-D-ribityl)lumazine + H(+) = 5-amino-6-(D-ribitylamino)uracil + riboflavin. Its pathway is cofactor biosynthesis; riboflavin biosynthesis; riboflavin from 2-hydroxy-3-oxobutyl phosphate and 5-amino-6-(D-ribitylamino)uracil: step 2/2. With respect to regulation, is activated by sulfite ions. Catalyzes the dismutation of two molecules of 6,7-dimethyl-8-ribityllumazine, resulting in the formation of riboflavin and 5-amino-6-(D-ribitylamino)uracil. This is Riboflavin synthase (ribE) from Bacillus subtilis (strain 168).